The chain runs to 150 residues: D-aminoacyl-tRNA deacylase (150 aa).

The Gly-cisPro motif, important for rejection of L-amino acids motif lies at 136–137; sequence GP.

It belongs to the DTD family. In terms of assembly, homodimer.

It localises to the cytoplasm. It catalyses the reaction glycyl-tRNA(Ala) + H2O = tRNA(Ala) + glycine + H(+). The enzyme catalyses a D-aminoacyl-tRNA + H2O = a tRNA + a D-alpha-amino acid + H(+). Functionally, an aminoacyl-tRNA editing enzyme that deacylates mischarged D-aminoacyl-tRNAs. Also deacylates mischarged glycyl-tRNA(Ala), protecting cells against glycine mischarging by AlaRS. Acts via tRNA-based rather than protein-based catalysis; rejects L-amino acids rather than detecting D-amino acids in the active site. By recycling D-aminoacyl-tRNA to D-amino acids and free tRNA molecules, this enzyme counteracts the toxicity associated with the formation of D-aminoacyl-tRNA entities in vivo and helps enforce protein L-homochirality. This Macrococcus caseolyticus (strain JCSC5402) (Macrococcoides caseolyticum) protein is D-aminoacyl-tRNA deacylase.